The sequence spans 318 residues: Large ribosomal subunit protein uL10 (318 aa).

A Phosphotyrosine modification is found at Tyr-24. Thr-59 carries the post-translational modification Phosphothreonine. Lys-264 participates in a covalent cross-link: Glycyl lysine isopeptide (Lys-Gly) (interchain with G-Cter in ubiquitin). Lys-298 is covalently cross-linked (Glycyl lysine isopeptide (Lys-Gly) (interchain with G-Cter in SUMO1); alternate). A Glycyl lysine isopeptide (Lys-Gly) (interchain with G-Cter in SUMO2); alternate cross-link involves residue Lys-298. Residues 298-318 form a disordered region; it reads KVEAKEESEESDEDMGFGLFD. The span at 303-312 shows a compositional bias: acidic residues; it reads EESEESDEDM. Phosphoserine is present on residues Ser-305 and Ser-308.

The protein belongs to the universal ribosomal protein uL10 family. As to quaternary structure, P0 forms a pentameric complex by interaction with dimers of P1 and P2. Identified in a IGF2BP1-dependent mRNP granule complex containing untranslated mRNAs. Interacts with APEX1. Interacts with FMR1. Ubiquitinated at Lys-264 by RNF14 and RNF25 in response to ribosome collisions (ribosome stalling).

The protein resides in the nucleus. It is found in the cytoplasm. In terms of biological role, ribosomal protein P0 is the functional equivalent of E.coli protein L10. This chain is Large ribosomal subunit protein uL10 (RPLP0), found in Sus scrofa (Pig).